The primary structure comprises 162 residues: Regulatory protein RecX (162 aa).

Belongs to the RecX family.

The protein localises to the cytoplasm. Modulates RecA activity. This is Regulatory protein RecX from Xanthomonas axonopodis pv. citri (strain 306).